An 83-amino-acid polypeptide reads, in one-letter code: Hainantoxin-III 11 (83 aa).

Residues 1–21 form the signal peptide; it reads MKASMFLALAGLVLLFVVGYA. Residues 22–48 constitute a propeptide that is removed on maturation; sequence SESEEKDFPRELLSKIFAVDDFKGEER. 3 disulfides stabilise this stretch: Cys50–Cys65, Cys57–Cys70, and Cys64–Cys77. At Leu81 the chain carries Leucine amide.

It belongs to the neurotoxin 10 (Hwtx-1) family. 15 (Hntx-3) subfamily. As to quaternary structure, monomer. In terms of tissue distribution, expressed by the venom gland.

Its subcellular location is the secreted. Its function is as follows. Selective antagonist of neuronal tetrodotoxin (TTX)-sensitive voltage-gated sodium channels (IC(50)=1270 nM on Nav1.1/SCN1A, 270 nM on Nav1.2/SCN2A, 491 nM on Nav1.3/SCN3A and 232 nM on Nav1.7/SCN9A). This toxin suppress Nav1.7 current amplitude without significantly altering the activation, inactivation, and repriming kinetics. Short extreme depolarizations partially activate the toxin-bound channel, indicating voltage-dependent inhibition of this toxin. This toxin increases the deactivation of the Nav1.7 current after extreme depolarizations. The toxin-Nav1.7 complex is gradually dissociated upon prolonged strong depolarizations in a voltage-dependent manner, and the unbound toxin rebinds to Nav1.7 after a long repolarization. Moreover, analysis of chimeric channels showed that the DIIS3-S4 linker is critical for toxin binding to Nav1.7. These data are consistent with this toxin interacting with Nav1.7 site 4 and trapping the domain II voltage sensor in the closed state. The protein is Hainantoxin-III 11 of Cyriopagopus hainanus (Chinese bird spider).